The sequence spans 150 residues: Urease accessory protein UreE (150 aa).

The protein belongs to the UreE family.

The protein localises to the cytoplasm. In terms of biological role, involved in urease metallocenter assembly. Binds nickel. Probably functions as a nickel donor during metallocenter assembly. This Parasynechococcus marenigrum (strain WH8102) protein is Urease accessory protein UreE.